A 145-amino-acid polypeptide reads, in one-letter code: uncharacterized protein (145 aa).

The signal sequence occupies residues 1 to 20 (MKTCTVICCTALVLGLTAYA).

This is an uncharacterized protein from Aedes vexans (Inland floodwater mosquito).